The chain runs to 954 residues: Glycine dehydrogenase (decarboxylating) (954 aa).

K704 carries the N6-(pyridoxal phosphate)lysine modification.

This sequence belongs to the GcvP family. The glycine cleavage system is composed of four proteins: P, T, L and H. It depends on pyridoxal 5'-phosphate as a cofactor.

The catalysed reaction is N(6)-[(R)-lipoyl]-L-lysyl-[glycine-cleavage complex H protein] + glycine + H(+) = N(6)-[(R)-S(8)-aminomethyldihydrolipoyl]-L-lysyl-[glycine-cleavage complex H protein] + CO2. Functionally, the glycine cleavage system catalyzes the degradation of glycine. The P protein binds the alpha-amino group of glycine through its pyridoxal phosphate cofactor; CO(2) is released and the remaining methylamine moiety is then transferred to the lipoamide cofactor of the H protein. This chain is Glycine dehydrogenase (decarboxylating), found in Sinorhizobium medicae (strain WSM419) (Ensifer medicae).